A 251-amino-acid polypeptide reads, in one-letter code: Flap endonuclease Xni (251 aa).

Asp104 serves as a coordination point for Mg(2+). Residues 160–249 (VQPQQLPDYW…IDGNLQQLRL (90 aa)) enclose the 5'-3' exonuclease domain. Positions 171, 172, 180, 182, and 185 each coordinate K(+). Residues 184-189 (GIGPKS) are interaction with DNA.

The protein belongs to the Xni family. The cofactor is Mg(2+). It depends on K(+) as a cofactor.

In terms of biological role, has flap endonuclease activity. During DNA replication, flap endonucleases cleave the 5'-overhanging flap structure that is generated by displacement synthesis when DNA polymerase encounters the 5'-end of a downstream Okazaki fragment. This is Flap endonuclease Xni from Escherichia coli O17:K52:H18 (strain UMN026 / ExPEC).